Consider the following 127-residue polypeptide: Protein LLP homolog (127 aa).

Positions 1-21 (MAKSLRSKWKRKMRAEKRKKN) are enriched in basic residues. Positions 1-24 (MAKSLRSKWKRKMRAEKRKKNAPK) are disordered. Residues K65 and K72 each participate in a glycyl lysine isopeptide (Lys-Gly) (interchain with G-Cter in SUMO2) cross-link. The span at 98 to 120 (RQRKRLKAKRERKKGKSKVKAMK) shows a compositional bias: basic residues. Positions 98–127 (RQRKRLKAKRERKKGKSKVKAMKAAKGLTW) are disordered.

It belongs to the learning-associated protein family. Interacts with CTCF, MYO1C and with the transcriptional machinery, including RNA polymerase II and TBP.

It localises to the nucleus. The protein localises to the nucleolus. The protein resides in the chromosome. In hippocampal neurons, regulates dendritic and spine growth and synaptic transmission. The chain is Protein LLP homolog (LLPH) from Bos taurus (Bovine).